The sequence spans 117 residues: Immunoglobulin lambda variable 1-47 (117 aa).

A signal peptide spans 1-19 (MAGFPLLLTLLTHCAGSWA). Glutamine 20 bears the Pyrrolidone carboxylic acid mark. The tract at residues 20 to 44 (QSVLTQPPSASGTPGQRVTISCSGS) is framework-1. Positions 20–117 (QSVLTQPPSA…CAAWDDSLSG (98 aa)) constitute an Ig-like domain. A disulfide bridge connects residues cysteine 41 and cysteine 108. A complementarity-determining-1 region spans residues 45–52 (SSNIGSNY). Positions 53 to 69 (VYWYQQLPGTAPKLLIY) are framework-2. Positions 70–72 (SNN) are complementarity-determining-2. The tract at residues 73–108 (QRPSGVPDRFSGSKSGTSASLAISGLRSEDEADYYC) is framework-3. Positions 109–117 (AAWDDSLSG) are complementarity-determining-3.

Immunoglobulins are composed of two identical heavy chains and two identical light chains; disulfide-linked.

The protein resides in the secreted. It localises to the cell membrane. Functionally, v region of the variable domain of immunoglobulin light chains that participates in the antigen recognition. Immunoglobulins, also known as antibodies, are membrane-bound or secreted glycoproteins produced by B lymphocytes. In the recognition phase of humoral immunity, the membrane-bound immunoglobulins serve as receptors which, upon binding of a specific antigen, trigger the clonal expansion and differentiation of B lymphocytes into immunoglobulins-secreting plasma cells. Secreted immunoglobulins mediate the effector phase of humoral immunity, which results in the elimination of bound antigens. The antigen binding site is formed by the variable domain of one heavy chain, together with that of its associated light chain. Thus, each immunoglobulin has two antigen binding sites with remarkable affinity for a particular antigen. The variable domains are assembled by a process called V-(D)-J rearrangement and can then be subjected to somatic hypermutations which, after exposure to antigen and selection, allow affinity maturation for a particular antigen. The chain is Immunoglobulin lambda variable 1-47 from Homo sapiens (Human).